We begin with the raw amino-acid sequence, 398 residues long: Carbamoyl phosphate synthase small chain (398 aa).

CPSase regions lie at residues 1 to 205 (MTQT…TNDA) and 1 to 207 (MTQT…DACN). Residues S60, G257, and G259 each contribute to the L-glutamine site. The Glutamine amidotransferase type-1 domain occupies 209-397 (HIVAIDYGIK…FNLIMDYKRT (189 aa)). Catalysis depends on C286, which acts as the Nucleophile. L287, Q290, N328, G330, and F331 together coordinate L-glutamine. Active-site residues include H370 and E372.

It belongs to the CarA family. As to quaternary structure, composed of two chains; the small (or glutamine) chain promotes the hydrolysis of glutamine to ammonia, which is used by the large (or ammonia) chain to synthesize carbamoyl phosphate. Tetramer of heterodimers (alpha,beta)4.

It carries out the reaction hydrogencarbonate + L-glutamine + 2 ATP + H2O = carbamoyl phosphate + L-glutamate + 2 ADP + phosphate + 2 H(+). The enzyme catalyses L-glutamine + H2O = L-glutamate + NH4(+). Its pathway is amino-acid biosynthesis; L-arginine biosynthesis; carbamoyl phosphate from bicarbonate: step 1/1. It functions in the pathway pyrimidine metabolism; UMP biosynthesis via de novo pathway; (S)-dihydroorotate from bicarbonate: step 1/3. Small subunit of the glutamine-dependent carbamoyl phosphate synthetase (CPSase). CPSase catalyzes the formation of carbamoyl phosphate from the ammonia moiety of glutamine, carbonate, and phosphate donated by ATP, constituting the first step of 2 biosynthetic pathways, one leading to arginine and/or urea and the other to pyrimidine nucleotides. The small subunit (glutamine amidotransferase) binds and cleaves glutamine to supply the large subunit with the substrate ammonia. In Bartonella quintana (strain Toulouse) (Rochalimaea quintana), this protein is Carbamoyl phosphate synthase small chain.